The primary structure comprises 401 residues: uncharacterized protein (401 aa).

Belongs to the serpin family.

May act as an inhibitor for a host chymotrypsin-like protease. This is an uncharacterized protein from Acanthamoeba polyphaga mimivirus (APMV).